Reading from the N-terminus, the 494-residue chain is Sugar phosphate exchanger 3 (494 aa).

A helical membrane pass occupies residues 10 to 30 (GALLTSFSHHHLAVFLLTFFS). Residue Asn58 is glycosylated (N-linked (GlcNAc...) asparagine). 5 helical membrane-spanning segments follow: residues 81-101 (TLFL…GLFI), 113-133 (WVLS…GTLT), 146-166 (GLWI…VAVM), 177-197 (VVFG…AFLA), and 209-229 (FLVT…GLLV). A disordered region spans residues 240–261 (GAEESSEEDSQRPLIDGAENED). Transmembrane regions (helical) follow at residues 297–317 (LAYA…PFYL), 333–353 (IWYD…SDVL), 357–377 (APVL…YSRS), 386–406 (LLMT…SSAI), 428–448 (GIVD…VSLI), and 457–477 (VFYF…PLIV).

It belongs to the major facilitator superfamily. Organophosphate:Pi antiporter (OPA) (TC 2.A.1.4) family. Interacts with ATRAID; the interaction is direct and both proteins are mutually dependent for their stability. In terms of processing, glycosylated.

It localises to the endoplasmic reticulum membrane. Its subcellular location is the lysosome membrane. Its function is as follows. Unlike the other SLC37 members, lacks glucose-6-phosphate antiporter activity. In osteoclasts, forms a transporter complex with ATRAID for nitrogen-containing-bisphophonates (N-BPs) required for releasing N-BP molecules that have trafficked to lysosomes through fluid-phase endocytosis into the cytosol. The protein is Sugar phosphate exchanger 3 (Slc37a3) of Mus musculus (Mouse).